A 244-amino-acid chain; its full sequence is 6-carboxyhexanoate--CoA ligase (244 aa).

This sequence belongs to the BioW family. Homodimer. Requires Mg(2+) as cofactor.

The enzyme catalyses heptanedioate + ATP + CoA = 6-carboxyhexanoyl-CoA + AMP + diphosphate. It functions in the pathway metabolic intermediate metabolism; pimeloyl-CoA biosynthesis; pimeloyl-CoA from pimelate: step 1/1. Catalyzes the transformation of pimelate into pimeloyl-CoA with concomitant hydrolysis of ATP to AMP. This Methanococcus maripaludis (strain DSM 14266 / JCM 13030 / NBRC 101832 / S2 / LL) protein is 6-carboxyhexanoate--CoA ligase.